A 291-amino-acid chain; its full sequence is 4-hydroxybenzoate octaprenyltransferase (291 aa).

8 consecutive transmembrane segments (helical) span residues 23–43, 47–67, 98–118, 139–159, 171–191, 216–236, 238–258, and 267–287; these read PIGTLLLLWPTLWAMWMAADG, PALVAIFVVGTVLMRSAGCAI, LAVAAVLALVAFTLILPLNAL, FFAIPQAYLGIAFGFGIPMAY, WLMLAANVLWAIAYDTAYAMV, IMLCYAGFFGIMAWVGHALAL, AAYWIGLAAAAALAGYYYTLL, and FFVFRHNNWFGACVFVGAALA.

Belongs to the UbiA prenyltransferase family. Mg(2+) serves as cofactor.

It localises to the cell inner membrane. The catalysed reaction is all-trans-octaprenyl diphosphate + 4-hydroxybenzoate = 4-hydroxy-3-(all-trans-octaprenyl)benzoate + diphosphate. The protein operates within cofactor biosynthesis; ubiquinone biosynthesis. Functionally, catalyzes the prenylation of para-hydroxybenzoate (PHB) with an all-trans polyprenyl group. Mediates the second step in the final reaction sequence of ubiquinone-8 (UQ-8) biosynthesis, which is the condensation of the polyisoprenoid side chain with PHB, generating the first membrane-bound Q intermediate 3-octaprenyl-4-hydroxybenzoate. This chain is 4-hydroxybenzoate octaprenyltransferase, found in Ralstonia nicotianae (strain ATCC BAA-1114 / GMI1000) (Ralstonia solanacearum).